The sequence spans 485 residues: Shutoff alkaline exonuclease (485 aa).

The protein belongs to the herpesviridae alkaline nuclease family. In terms of assembly, forms a complex with the DNA polymerase, the DNA polymerase processivity factor, and the major DNA binding protein.

Its subcellular location is the host nucleus. The protein localises to the host cytoplasm. Its function is as follows. Plays a role in processing non linear or branched viral DNA intermediates in order to promote the production of mature packaged unit-length linear progeny viral DNA molecules. Exhibits endonuclease and exonuclease activities and accepts both double-stranded and single-stranded DNA as substrate. Exonuclease digestion of DNA is in the 5'-&gt; 3' direction and the products are 5'-monophosphate nucleosides. Additionally, forms a recombinase with the major DNA-binding protein, which displays strand exchange activity. Also acts as a cytoplasmic RNA endonuclease that induces degradation of the majority of the cellular messenger RNAs during early lytic infection. The resulting inhibition of cellular protein synthesis serves to ensure maximal viral gene expression and evasion from host immune response. Internally cleaves host mRNAs which are then degraded by the cellular exonuclease XRN1. Bypasses therefore the regulatory steps of deadenylation and decapping normally required for XRN1 activation. This is Shutoff alkaline exonuclease (37) from Alcelaphine herpesvirus 1 (strain C500) (AlHV-1).